A 256-amino-acid chain; its full sequence is Cilia- and flagella-associated protein 410 (256 aa).

LRR repeat units follow at residues 19–40 (SVRK…QEMP), 41–62 (SLEV…SRCQ), and 63–84 (RLSE…FYLK). An LRRCT domain is found at 97–137 (NPCCGTSPHRYRMTVLRTLPRLQKLDNQAVTEEELSRALSE). 2 disordered regions span residues 129–156 (EELS…GGPK) and 168–212 (AETG…SSHR). Residues serine 136 and serine 177 each carry the phosphoserine modification.

As to quaternary structure, found in a complex with CFAP410, NEK1 and SPATA7. Interacts with NEK1. Widely expressed. Expressed in the retina.

It is found in the mitochondrion. It localises to the cytoplasm. The protein localises to the cytoskeleton. Its subcellular location is the cilium basal body. The protein resides in the cell projection. It is found in the cilium. It localises to the photoreceptor outer segment. In terms of biological role, plays a role in cilia formation and/or maintenance. Plays a role in the regulation of cell morphology and cytoskeletal organization. Involved in DNA damage repair. The chain is Cilia- and flagella-associated protein 410 from Homo sapiens (Human).